We begin with the raw amino-acid sequence, 182 residues long: ATP-dependent protease subunit HslV (182 aa).

T12 is an active-site residue. Residues A167, C170, and T173 each coordinate Na(+).

The protein belongs to the peptidase T1B family. HslV subfamily. A double ring-shaped homohexamer of HslV is capped on each side by a ring-shaped HslU homohexamer. The assembly of the HslU/HslV complex is dependent on binding of ATP.

The protein localises to the cytoplasm. The catalysed reaction is ATP-dependent cleavage of peptide bonds with broad specificity.. With respect to regulation, allosterically activated by HslU binding. Its function is as follows. Protease subunit of a proteasome-like degradation complex believed to be a general protein degrading machinery. The polypeptide is ATP-dependent protease subunit HslV (Prosthecochloris aestuarii (strain DSM 271 / SK 413)).